Reading from the N-terminus, the 157-residue chain is 3-hydroxyacyl-[acyl-carrier-protein] dehydratase FabZ (157 aa).

H58 is an active-site residue.

The protein belongs to the thioester dehydratase family. FabZ subfamily.

The protein localises to the cytoplasm. The catalysed reaction is a (3R)-hydroxyacyl-[ACP] = a (2E)-enoyl-[ACP] + H2O. Its function is as follows. Involved in unsaturated fatty acids biosynthesis. Catalyzes the dehydration of short chain beta-hydroxyacyl-ACPs and long chain saturated and unsaturated beta-hydroxyacyl-ACPs. In Rhizobium rhizogenes (strain K84 / ATCC BAA-868) (Agrobacterium radiobacter), this protein is 3-hydroxyacyl-[acyl-carrier-protein] dehydratase FabZ.